We begin with the raw amino-acid sequence, 967 residues long: Siderophore exporter MmpL4 (967 aa).

Transmembrane regions (helical) follow at residues 26-46 (AFAV…TVFV), 210-230 (VIFI…LLLI), 242-262 (VVAV…VSLL), 303-323 (AHVI…LSFA), 333-353 (IPCA…GPAV), 384-404 (WPLP…LALP), 769-789 (WDLL…MLII), 793-813 (FIAA…SFGL), 821-841 (ILAI…LLAV), 875-895 (VVTN…VSDL), and 913-934 (TLIV…WFWW). Residues 943 to 967 (ARTPTVPSETQPAGRPLAMSSDRLG) are disordered.

The protein belongs to the resistance-nodulation-cell division (RND) (TC 2.A.6) family. MmpL subfamily. Interacts with MmpS4.

The protein localises to the cell inner membrane. Functionally, part of an export system, which is required for biosynthesis and secretion of siderophores. This is Siderophore exporter MmpL4 (mmpL4) from Mycobacterium tuberculosis (strain CDC 1551 / Oshkosh).